The sequence spans 386 residues: Succinate--CoA ligase [ADP-forming] subunit beta (386 aa).

Positions 9–244 (KAVLRSYGVS…LDEEDSKEIE (236 aa)) constitute an ATP-grasp domain. ATP is bound by residues K46, 53-55 (GRG), E99, C102, and E107. The Mg(2+) site is built by N199 and D213. Substrate-binding positions include N264 and 321-323 (GIM).

Belongs to the succinate/malate CoA ligase beta subunit family. As to quaternary structure, heterotetramer of two alpha and two beta subunits. It depends on Mg(2+) as a cofactor.

The catalysed reaction is succinate + ATP + CoA = succinyl-CoA + ADP + phosphate. The enzyme catalyses GTP + succinate + CoA = succinyl-CoA + GDP + phosphate. The protein operates within carbohydrate metabolism; tricarboxylic acid cycle; succinate from succinyl-CoA (ligase route): step 1/1. Succinyl-CoA synthetase functions in the citric acid cycle (TCA), coupling the hydrolysis of succinyl-CoA to the synthesis of either ATP or GTP and thus represents the only step of substrate-level phosphorylation in the TCA. The beta subunit provides nucleotide specificity of the enzyme and binds the substrate succinate, while the binding sites for coenzyme A and phosphate are found in the alpha subunit. The sequence is that of Succinate--CoA ligase [ADP-forming] subunit beta from Bacillus cereus (strain B4264).